We begin with the raw amino-acid sequence, 258 residues long: Leucyl/phenylalanyl-tRNA--protein transferase (258 aa).

It belongs to the L/F-transferase family.

It is found in the cytoplasm. The catalysed reaction is N-terminal L-lysyl-[protein] + L-leucyl-tRNA(Leu) = N-terminal L-leucyl-L-lysyl-[protein] + tRNA(Leu) + H(+). It catalyses the reaction N-terminal L-arginyl-[protein] + L-leucyl-tRNA(Leu) = N-terminal L-leucyl-L-arginyl-[protein] + tRNA(Leu) + H(+). The enzyme catalyses L-phenylalanyl-tRNA(Phe) + an N-terminal L-alpha-aminoacyl-[protein] = an N-terminal L-phenylalanyl-L-alpha-aminoacyl-[protein] + tRNA(Phe). Its function is as follows. Functions in the N-end rule pathway of protein degradation where it conjugates Leu, Phe and, less efficiently, Met from aminoacyl-tRNAs to the N-termini of proteins containing an N-terminal arginine or lysine. This is Leucyl/phenylalanyl-tRNA--protein transferase from Alkalilimnicola ehrlichii (strain ATCC BAA-1101 / DSM 17681 / MLHE-1).